Reading from the N-terminus, the 71-residue chain is Beta-defensin 7 (71 aa).

Residues 1 to 22 (MRIHYVLFAFLLVLLSPFAAFS) form the signal peptide. Residue Gln-23 is modified to Pyrrolidone carboxylic acid. Residues 23–25 (QDI) constitute a propeptide that is removed on maturation. 3 cysteine pairs are disulfide-bonded: Cys-31/Cys-58, Cys-38/Cys-52, and Cys-42/Cys-59.

This sequence belongs to the beta-defensin family. LAP/TAP subfamily.

It localises to the secreted. Its function is as follows. Has bactericidal activity. The chain is Beta-defensin 7 (Defb7) from Mus musculus (Mouse).